Consider the following 894-residue polypeptide: Alanine--tRNA ligase (894 aa).

4 residues coordinate Zn(2+): His587, His591, Cys691, and His695. The tract at residues 739–758 (AEGDRAAEEAKGRLQEERDA) is disordered.

Belongs to the class-II aminoacyl-tRNA synthetase family. It depends on Zn(2+) as a cofactor.

Its subcellular location is the cytoplasm. It carries out the reaction tRNA(Ala) + L-alanine + ATP = L-alanyl-tRNA(Ala) + AMP + diphosphate. Catalyzes the attachment of alanine to tRNA(Ala) in a two-step reaction: alanine is first activated by ATP to form Ala-AMP and then transferred to the acceptor end of tRNA(Ala). Also edits incorrectly charged Ser-tRNA(Ala) and Gly-tRNA(Ala) via its editing domain. This Cenarchaeum symbiosum (strain A) protein is Alanine--tRNA ligase.